Here is a 349-residue protein sequence, read N- to C-terminus: 2-oxoglutarate-Fe(II) type oxidoreductase hxnY (349 aa).

In terms of domain architecture, Fe2OG dioxygenase spans 178 to 282 (GVATMRMLHY…RYSIPFFFSG (105 aa)). Fe cation-binding residues include histidine 205, aspartate 207, and histidine 263. Arginine 273 is a binding site for 2-oxoglutarate.

The protein belongs to the iron/ascorbate-dependent oxidoreductase family. Fe(2+) serves as cofactor.

2-oxoglutarate-Fe(II) type oxidoreductase, part of the hnx cluster involved in the purine degradation. The nicotinate hydroxylase hnxS accepts nicotinate as a substrate and catalyzes the first step of nicotinate catabolism. The major facilitator-type transporters hxnP and hxnZ are probably involved in the uptake of nicotinate-derived metabolites, and the oxidoreductases hxnT and hxnY in the further metabolism of 6-OH nicotinic acid. The sequence is that of 2-oxoglutarate-Fe(II) type oxidoreductase hxnY from Emericella nidulans (strain FGSC A4 / ATCC 38163 / CBS 112.46 / NRRL 194 / M139) (Aspergillus nidulans).